Here is a 215-residue protein sequence, read N- to C-terminus: MRLYLASTSPARLALLRAAGIEPVVVPSQVDEPAAVAAAEAEHGPLSPDAMVQLLARLKAEAVRGALDGEPIDGLVFGGDSAFAIDGALHGKPHRPEIARERWRAQRGRTGRLHSGHWLIDHRGGVENAAVGATAVAAVSFADVTDAEIDAYIASGEPLEVAGAFTIDSLGGPFIRRVEGDPSTVVGLSLSTLRDLVRQLRIEWTELWNRAGVSL.

D80 functions as the Proton acceptor in the catalytic mechanism.

This sequence belongs to the Maf family. A divalent metal cation serves as cofactor.

It localises to the cytoplasm. It carries out the reaction a ribonucleoside 5'-triphosphate + H2O = a ribonucleoside 5'-phosphate + diphosphate + H(+). It catalyses the reaction a 2'-deoxyribonucleoside 5'-triphosphate + H2O = a 2'-deoxyribonucleoside 5'-phosphate + diphosphate + H(+). In terms of biological role, nucleoside triphosphate pyrophosphatase. May have a dual role in cell division arrest and in preventing the incorporation of modified nucleotides into cellular nucleic acids. The chain is Nucleoside triphosphate pyrophosphatase from Leifsonia xyli subsp. xyli (strain CTCB07).